A 490-amino-acid chain; its full sequence is Adenylosuccinate synthetase, chloroplastic (490 aa).

A chloroplast-targeting transit peptide spans 1 to 45 (MSLSSLTLDSNPRFAVGGPYHRRYPPLHHPRSFVSCSAKRPAVSA). Ser46 is subject to N-acetylserine. Residues 77–83 (GDEGKGK) and 105–107 (GHT) contribute to the GTP site. Asp78 acts as the Proton acceptor in catalysis. Mg(2+) contacts are provided by Asp78 and Gly105. Residues 78 to 81 (DEGK), 103 to 106 (NAGH), Thr195, Arg209, Gln289, Thr304, and Arg368 each bind IMP. His106 functions as the Proton donor in the catalytic mechanism. Residue 364–370 (TTTGRPR) coordinates substrate. Residues Arg370, 396–398 (KLD), and 479–481 (GIG) contribute to the GTP site.

It belongs to the adenylosuccinate synthetase family. Homodimer. It depends on Mg(2+) as a cofactor.

Its subcellular location is the plastid. It localises to the chloroplast. The catalysed reaction is IMP + L-aspartate + GTP = N(6)-(1,2-dicarboxyethyl)-AMP + GDP + phosphate + 2 H(+). Its pathway is purine metabolism; AMP biosynthesis via de novo pathway; AMP from IMP: step 1/2. Plays an important role in the de novo pathway and in the salvage pathway of purine nucleotide biosynthesis. Catalyzes the first committed step in the biosynthesis of AMP from IMP. This Arabidopsis thaliana (Mouse-ear cress) protein is Adenylosuccinate synthetase, chloroplastic.